The following is a 136-amino-acid chain: Protein PsiE homolog (136 aa).

4 helical membrane passes run alanine 15–leucine 35, valine 58–phenylalanine 78, histidine 83–isoleucine 103, and proline 108–cysteine 128.

It belongs to the PsiE family.

It is found in the cell inner membrane. The protein is Protein PsiE homolog of Klebsiella pneumoniae (strain 342).